The chain runs to 201 residues: Recombination protein RecR (201 aa).

Residues 57-72 form a C4-type zinc finger; that stretch reads CRSCRTFTEEDECNIC. In terms of domain architecture, Toprim spans 81–176; the sequence is GQLCVVEMPE…KVTRIAHGIP (96 aa).

This sequence belongs to the RecR family.

May play a role in DNA repair. It seems to be involved in an RecBC-independent recombinational process of DNA repair. It may act with RecF and RecO. The protein is Recombination protein RecR of Actinobacillus pleuropneumoniae serotype 5b (strain L20).